We begin with the raw amino-acid sequence, 395 residues long: HORMA domain-containing protein 1 (395 aa).

Positions 24 to 226 (QQSLVLVKRL…TPFHTFKVKV (203 aa)) constitute an HORMA domain. Residues 329 to 395 (DVSESKTRSG…RKFSEPKEYV (67 aa)) form a disordered region. Residues 344 to 353 (KMANGNQPVK) are compositionally biased toward polar residues. Over residues 354-363 (SSKENRKRNQ) the composition is skewed to basic and acidic residues. The residue at position 377 (serine 377) is a Phosphoserine. A Nuclear localization signal motif is present at residues 384–387 (KRRK).

As to quaternary structure, interacts with HORMAD2. Interacts with IHO1. In terms of processing, phosphorylated at Ser-378 in a SPO11-dependent manner.

It is found in the nucleus. The protein resides in the chromosome. Its function is as follows. Plays a key role in meiotic progression. Regulates 3 different functions during meiosis: ensures that sufficient numbers of processed DNA double-strand breaks (DSBs) are available for successful homology search by increasing the steady-state numbers of single-stranded DSB ends. Promotes synaptonemal-complex formation independently of its role in homology search. Plays a key role in the male mid-pachytene checkpoint and the female meiotic prophase checkpoint: required for efficient build-up of ATR activity on unsynapsed chromosome regions, a process believed to form the basis of meiotic silencing of unsynapsed chromatin (MSUC) and meiotic prophase quality control in both sexes. The sequence is that of HORMA domain-containing protein 1 (HORMAD1) from Canis lupus familiaris (Dog).